A 506-amino-acid polypeptide reads, in one-letter code: uncharacterized protein (506 aa).

This sequence to R.prowazekii RP789, RP027 and RP028.

This is an uncharacterized protein from Synechocystis sp. (strain ATCC 27184 / PCC 6803 / Kazusa).